Reading from the N-terminus, the 504-residue chain is Maturase K (504 aa).

This sequence belongs to the intron maturase 2 family. MatK subfamily.

Its subcellular location is the plastid. It localises to the chloroplast. Usually encoded in the trnK tRNA gene intron. Probably assists in splicing its own and other chloroplast group II introns. The protein is Maturase K of Pachira aquatica (Guiana chestnut).